The chain runs to 328 residues: Tetraacyldisaccharide 4'-kinase (328 aa).

Residue 55–62 (TAGGNGKT) participates in ATP binding.

This sequence belongs to the LpxK family.

It catalyses the reaction a lipid A disaccharide + ATP = a lipid IVA + ADP + H(+). It participates in glycolipid biosynthesis; lipid IV(A) biosynthesis; lipid IV(A) from (3R)-3-hydroxytetradecanoyl-[acyl-carrier-protein] and UDP-N-acetyl-alpha-D-glucosamine: step 6/6. Its function is as follows. Transfers the gamma-phosphate of ATP to the 4'-position of a tetraacyldisaccharide 1-phosphate intermediate (termed DS-1-P) to form tetraacyldisaccharide 1,4'-bis-phosphate (lipid IVA). This is Tetraacyldisaccharide 4'-kinase from Shigella flexneri serotype 5b (strain 8401).